A 214-amino-acid polypeptide reads, in one-letter code: Outer-membrane lipoprotein LolB (214 aa).

The N-terminal stretch at 1–25 is a signal peptide; that stretch reads MNNLKRFTESIFSCIALSTLLFLGG. Residue cysteine 26 is the site of N-palmitoyl cysteine attachment. Cysteine 26 is lipidated: S-diacylglycerol cysteine.

It belongs to the LolB family. Monomer.

It is found in the cell outer membrane. Its function is as follows. Plays a critical role in the incorporation of lipoproteins in the outer membrane after they are released by the LolA protein. In Shewanella putrefaciens (strain CN-32 / ATCC BAA-453), this protein is Outer-membrane lipoprotein LolB.